Reading from the N-terminus, the 122-residue chain is Double-headed protease inhibitor, submandibular gland (122 aa).

2 consecutive Kazal-like domains span residues 10–70 (GGRK…KCDI) and 71–121 (ECPQ…QCQS). Intrachain disulfides connect Cys16/Cys50, Cys28/Cys47, Cys36/Cys68, Cys72/Cys101, Cys79/Cys98, and Cys87/Cys119.

The protein localises to the secreted. This inhibitor is composed of two homologous actively inhibiting halves: one which inhibits trypsin, the other which inhibits elastase. The chain is Double-headed protease inhibitor, submandibular gland from Mustela lutreola (European mink).